The following is a 190-amino-acid chain: LIM domain-containing protein WLIM1 (190 aa).

Ala2 is subject to N-acetylalanine. Residues 8–68 form the LIM zinc-binding 1 domain; the sequence is QKCMACDKTV…RPHFDQNFKR (61 aa). The disordered stretch occupies residues 74-98; that stretch reads KSFEGTPKIGKPDRPLEGERPAGTK. A compositionally biased stretch (basic and acidic residues) spans 83–95; that stretch reads GKPDRPLEGERPA. One can recognise an LIM zinc-binding 2 domain in the interval 108-168; the sequence is EKCVGCDKTV…KHHHIQLIKE (61 aa).

Interacts with F-actin. As to expression, expressed in roots, leaves, stems, flowers and siliques. Not detected in pollen.

The protein localises to the cytoplasm. The protein resides in the cytoskeleton. Functionally, binds to actin filaments and promotes cross-linking into thick bundles. Has an actin-stabilizing activity. The actin regulatory activities are not regulated by pH and [Ca(2+)]. This chain is LIM domain-containing protein WLIM1, found in Arabidopsis thaliana (Mouse-ear cress).